The following is a 179-amino-acid chain: ATP synthase subunit b (179 aa).

The helical transmembrane segment at 23 to 43 threads the bilayer; it reads IVVGLVAFGLLAFVLMKFVFP.

The protein belongs to the ATPase B chain family. F-type ATPases have 2 components, F(1) - the catalytic core - and F(0) - the membrane proton channel. F(1) has five subunits: alpha(3), beta(3), gamma(1), delta(1), epsilon(1). F(0) has three main subunits: a(1), b(2) and c(10-14). The alpha and beta chains form an alternating ring which encloses part of the gamma chain. F(1) is attached to F(0) by a central stalk formed by the gamma and epsilon chains, while a peripheral stalk is formed by the delta and b chains.

The protein localises to the cell membrane. Functionally, f(1)F(0) ATP synthase produces ATP from ADP in the presence of a proton or sodium gradient. F-type ATPases consist of two structural domains, F(1) containing the extramembraneous catalytic core and F(0) containing the membrane proton channel, linked together by a central stalk and a peripheral stalk. During catalysis, ATP synthesis in the catalytic domain of F(1) is coupled via a rotary mechanism of the central stalk subunits to proton translocation. Component of the F(0) channel, it forms part of the peripheral stalk, linking F(1) to F(0). The sequence is that of ATP synthase subunit b from Salinispora arenicola (strain CNS-205).